The following is a 256-amino-acid chain: Probable ribosomal RNA small subunit methyltransferase A (256 aa).

Residues His8, Leu10, Gly34, Glu55, Asp83, and Asn98 each coordinate S-adenosyl-L-methionine.

It belongs to the class I-like SAM-binding methyltransferase superfamily. rRNA adenine N(6)-methyltransferase family. RsmA subfamily.

Its subcellular location is the cytoplasm. In terms of biological role, specifically dimethylates two adjacent adenosines in the loop of a conserved hairpin near the 3'-end of 16S rRNA in the 30S particle. May play a critical role in biogenesis of 30S subunits. This Methanospirillum hungatei JF-1 (strain ATCC 27890 / DSM 864 / NBRC 100397 / JF-1) protein is Probable ribosomal RNA small subunit methyltransferase A.